We begin with the raw amino-acid sequence, 424 residues long: Serine--tRNA ligase (424 aa).

Residue 231–233 participates in L-serine binding; the sequence is TAE. 262-264 contacts ATP; sequence RSE. Glutamate 285 lines the L-serine pocket. ATP is bound at residue 349 to 352; the sequence is EISS. Residue serine 385 coordinates L-serine.

It belongs to the class-II aminoacyl-tRNA synthetase family. Type-1 seryl-tRNA synthetase subfamily. In terms of assembly, homodimer. The tRNA molecule binds across the dimer.

Its subcellular location is the cytoplasm. The catalysed reaction is tRNA(Ser) + L-serine + ATP = L-seryl-tRNA(Ser) + AMP + diphosphate + H(+). It carries out the reaction tRNA(Sec) + L-serine + ATP = L-seryl-tRNA(Sec) + AMP + diphosphate + H(+). It functions in the pathway aminoacyl-tRNA biosynthesis; selenocysteinyl-tRNA(Sec) biosynthesis; L-seryl-tRNA(Sec) from L-serine and tRNA(Sec): step 1/1. Functionally, catalyzes the attachment of serine to tRNA(Ser). Is also able to aminoacylate tRNA(Sec) with serine, to form the misacylated tRNA L-seryl-tRNA(Sec), which will be further converted into selenocysteinyl-tRNA(Sec). This chain is Serine--tRNA ligase, found in Bacillus pumilus (strain SAFR-032).